A 519-amino-acid polypeptide reads, in one-letter code: Putative thymidine phosphorylase (519 aa).

This sequence belongs to the thymidine/pyrimidine-nucleoside phosphorylase family. Type 2 subfamily.

It carries out the reaction thymidine + phosphate = 2-deoxy-alpha-D-ribose 1-phosphate + thymine. This chain is Putative thymidine phosphorylase, found in Maricaulis maris (strain MCS10) (Caulobacter maris).